The primary structure comprises 517 residues: Intermediate filament family orphan 2 (517 aa).

An IF rod domain is found at 53 to 484; that stretch reads NIHLLKGLNV…RLIKGSADRN (432 aa). Disordered stretches follow at residues 104 to 129, 330 to 349, and 478 to 517; these read EQAVQTGPELLRPPAPGGGHGLSSGA, KVASDDDISEQDGEVNRFSD, and KGSADRNSPSPSSVASSDSGSTDEIQDEFEREADVEPMVS. Residues 485 to 497 are compositionally biased toward low complexity; the sequence is SPSPSSVASSDSG. Residues 501-517 show a composition bias toward acidic residues; the sequence is EIQDEFEREADVEPMVS.

The protein belongs to the intermediate filament family.

This is Intermediate filament family orphan 2 (IFFO2) from Homo sapiens (Human).